A 122-amino-acid chain; its full sequence is uncharacterized protein (122 aa).

At T55 the chain carries Phosphothreonine. 5 positions are modified to phosphoserine: S72, S86, S96, S112, and S118.

It localises to the cytoplasm. This is an uncharacterized protein from Homo sapiens (Human).